The following is a 249-amino-acid chain: MVDFRKFYKENANVAYTVLGYPNLQTSEAFLQRLDQSPIDILELGVAYSDPIADGEIIADAAKIALDQGVDIHSVFELLARIKTKKALVFMVYYNLIFSYGLEKFVKKAKSLGICALIVPELSFEESDDLIKECERYNIALITLVSVTTPKERVKKLVKHAKGFIYLLASIGITGTKSVEEAILQDKVKEIRSFTNLPIFVGFGIQNNQDVKRMRKVADGVIVGTSIVKCFKQGNLDIIMKDIEEIFKK.

Active-site proton acceptor residues include glutamate 43 and aspartate 54.

Belongs to the TrpA family. Tetramer of two alpha and two beta chains.

The catalysed reaction is (1S,2R)-1-C-(indol-3-yl)glycerol 3-phosphate + L-serine = D-glyceraldehyde 3-phosphate + L-tryptophan + H2O. It participates in amino-acid biosynthesis; L-tryptophan biosynthesis; L-tryptophan from chorismate: step 5/5. The alpha subunit is responsible for the aldol cleavage of indoleglycerol phosphate to indole and glyceraldehyde 3-phosphate. The polypeptide is Tryptophan synthase alpha chain (Campylobacter jejuni subsp. jejuni serotype O:6 (strain 81116 / NCTC 11828)).